Consider the following 212-residue polypeptide: Putative DNA-binding protein At1g48610 (212 aa).

Residues 1 to 130 (MAKTALTPPA…GRPKKDDVAA (130 aa)) form a disordered region. Over residues 27 to 44 (NKPQTDATGVSATDTASQ) the composition is skewed to polar residues. DNA-binding regions (a.T hook) lie at residues 45-56 (KRGRGRPPKAKS), 70-79 (TKPSGRPKRN), and 94-98 (KKRGR). The segment covering 57-72 (DSSQIGAVSAKASTKP) has biased composition (polar residues). Over residues 103 to 113 (TVTAAVVTTAT) the composition is skewed to low complexity. The a.T hook 4 DNA-binding region spans 118-127 (RKRGRPKKDD). Residues 176-210 (DLKKRTALLQKKVKEAAAKLKQAVTAIDEVQKLAD) adopt a coiled-coil conformation.

The protein localises to the nucleus. May bind DNA. The protein is Putative DNA-binding protein At1g48610 of Arabidopsis thaliana (Mouse-ear cress).